The primary structure comprises 212 residues: Probable transaldolase (212 aa).

The Schiff-base intermediate with substrate role is filled by K84.

It belongs to the transaldolase family. Type 3B subfamily.

It localises to the cytoplasm. It catalyses the reaction D-sedoheptulose 7-phosphate + D-glyceraldehyde 3-phosphate = D-erythrose 4-phosphate + beta-D-fructose 6-phosphate. It functions in the pathway carbohydrate degradation; pentose phosphate pathway; D-glyceraldehyde 3-phosphate and beta-D-fructose 6-phosphate from D-ribose 5-phosphate and D-xylulose 5-phosphate (non-oxidative stage): step 2/3. Its function is as follows. Transaldolase is important for the balance of metabolites in the pentose-phosphate pathway. The sequence is that of Probable transaldolase from Bacillus pumilus (strain SAFR-032).